Reading from the N-terminus, the 361-residue chain is D-alanine--D-alanine ligase (361 aa).

In terms of domain architecture, ATP-grasp spans 134–344; sequence KLLLKSFNIP…FKDLIDNLID (211 aa). 167–222 lines the ATP pocket; that stretch reads KEVLGYPVIVKPAVLGSSIGINVAYSENQIESCIEEALKYDLTIVIEKFIEAREIE. The Mg(2+) site is built by aspartate 297, glutamate 311, and asparagine 313.

It belongs to the D-alanine--D-alanine ligase family. Mg(2+) is required as a cofactor. Requires Mn(2+) as cofactor.

The protein resides in the cytoplasm. The enzyme catalyses 2 D-alanine + ATP = D-alanyl-D-alanine + ADP + phosphate + H(+). The protein operates within cell wall biogenesis; peptidoglycan biosynthesis. In terms of biological role, cell wall formation. The polypeptide is D-alanine--D-alanine ligase (Borreliella afzelii (strain PKo) (Borrelia afzelii)).